Here is a 504-residue protein sequence, read N- to C-terminus: 2,3-bisphosphoglycerate-independent phosphoglycerate mutase (504 aa).

Mn(2+) contacts are provided by aspartate 11 and serine 61. Serine 61 serves as the catalytic Phosphoserine intermediate. Residues histidine 122, 152-153, arginine 183, arginine 189, 255-258, and lysine 329 contribute to the substrate site; these read RD and RNDR. 5 residues coordinate Mn(2+): aspartate 396, histidine 400, aspartate 437, histidine 438, and histidine 455.

This sequence belongs to the BPG-independent phosphoglycerate mutase family. As to quaternary structure, monomer. Mn(2+) serves as cofactor.

It catalyses the reaction (2R)-2-phosphoglycerate = (2R)-3-phosphoglycerate. Its pathway is carbohydrate degradation; glycolysis; pyruvate from D-glyceraldehyde 3-phosphate: step 3/5. Functionally, catalyzes the interconversion of 2-phosphoglycerate and 3-phosphoglycerate. The sequence is that of 2,3-bisphosphoglycerate-independent phosphoglycerate mutase from Bacteroides fragilis (strain ATCC 25285 / DSM 2151 / CCUG 4856 / JCM 11019 / LMG 10263 / NCTC 9343 / Onslow / VPI 2553 / EN-2).